We begin with the raw amino-acid sequence, 71 residues long: Brevinin-1E (71 aa).

A signal peptide spans 1-22 (MFTLKKSMLLLFFLGTINLSLC). A propeptide spanning residues 23–45 (EEERDADEEERRDNPDESEVEVE) is cleaved from the precursor. Residues Cys65 and Cys71 are joined by a disulfide bond.

The protein belongs to the frog skin active peptide (FSAP) family. Brevinin subfamily. In terms of tissue distribution, expressed by the skin glands.

It is found in the secreted. Shows antibacterial activity against representative Gram-negative and Gram-positive bacterial species, and a very high hemolytic activity. The protein is Brevinin-1E of Pelophylax lessonae (Pool frog).